The primary structure comprises 224 residues: ETGESKETGESKETGESKETGESKETGESKETGESKETGESKETGESKETGESKETGESKETGESKETGESKETGESKETGESKETGESKETGESKETGESKETRIYEETKYNKITSEFRETENVKITEESKDREGNKVSGPYENSENSNVTSESEETKKLAEKEENEGEKLGENVNDGASENSEDPKKLTEQEENGTKESSEETKDDKPEENEKKADNKKKKK.

17 repeat units span residues 1 to 6, 7 to 12, 13 to 18, 19 to 24, 25 to 30, 31 to 36, 37 to 42, 43 to 48, 49 to 54, 55 to 60, 61 to 66, 67 to 72, 73 to 78, 79 to 84, 85 to 90, 91 to 96, and 97 to 102. Positions 1–102 are 17 X 6 AA tandem repeats of E-T-G-E-S-K; the sequence is ETGESKETGE…GESKETGESK (102 aa). Positions 1–137 are enriched in basic and acidic residues; the sequence is ETGESKETGE…TEESKDREGN (137 aa). The disordered stretch occupies residues 1–224; it reads ETGESKETGE…KKADNKKKKK (224 aa). A compositionally biased stretch (low complexity) spans 144-153; sequence ENSENSNVTS. 2 stretches are compositionally biased toward basic and acidic residues: residues 156-173 and 185-217; these read EETK…EKLG and EDPK…EKKA.

The sequence is that of Processed variable antigen from Plasmodium falciparum.